Consider the following 990-residue polypeptide: Presequence protease, mitochondrial (990 aa).

The N-terminal 56 residues, 1–56, are a transit peptide targeting the mitochondrion; that stretch reads MLRFQRTVPRVAIRRLANVYSEGAVLHGYKVRRAQEIPEMRMAAVELEHEMTGARH. Residue H84 coordinates Zn(2+). The Proton acceptor role is filled by E87. H88 contacts Zn(2+). Residue E160 is part of the active site. E185 is a binding site for Zn(2+).

This sequence belongs to the peptidase M16 family. PreP subfamily. As to quaternary structure, monomer and homodimer; homodimerization is induced by binding of the substrate. Requires Zn(2+) as cofactor.

The protein resides in the mitochondrion intermembrane space. Its subcellular location is the mitochondrion matrix. Degrades mitochondrial transit peptides after their cleavage in the intermembrane space or in the matrix, and presequence peptides; clearance of these peptides is required to keep the presequence processing machinery running. Preferentially cleaves the N-terminal side of paired basic amino acid residues. Also degrades other unstructured peptides. May function as an ATP-dependent peptidase as opposed to a metalloendopeptidase. This Eremothecium gossypii (strain ATCC 10895 / CBS 109.51 / FGSC 9923 / NRRL Y-1056) (Yeast) protein is Presequence protease, mitochondrial (CYM1).